A 706-amino-acid polypeptide reads, in one-letter code: ATP-dependent DNA helicase HMI1, mitochondrial (706 aa).

Residues 5–277 form the UvrD-like helicase ATP-binding domain; sequence TPSQWKVINK…LKLFDNFRST (273 aa). ATP-binding positions include 29–34 and R275; that span reads GSGKTL. The UvrD-like helicase C-terminal domain maps to 278–593; sequence PEIISLASKI…KLSTIHSAKG (316 aa). Residues 693–706 constitute a propeptide, cleaved upon import into mitochondrion; that stretch reads YSSLRGCKSVFRRI.

The protein belongs to the helicase family. UvrD subfamily. Requires Mg(2+) as cofactor.

The protein resides in the mitochondrion inner membrane. The enzyme catalyses Couples ATP hydrolysis with the unwinding of duplex DNA by translocating in the 3'-5' direction.. It catalyses the reaction ATP + H2O = ADP + phosphate + H(+). Functionally, required for mitochondrial genome maintenance and mitochondrial DNA inheritance. The chain is ATP-dependent DNA helicase HMI1, mitochondrial (HMI1) from Saccharomyces cerevisiae (strain ATCC 204508 / S288c) (Baker's yeast).